We begin with the raw amino-acid sequence, 217 residues long: GTP cyclohydrolase 1 (217 aa).

C109, H112, and C180 together coordinate Zn(2+).

The protein belongs to the GTP cyclohydrolase I family. As to quaternary structure, toroid-shaped homodecamer, composed of two pentamers of five dimers.

It catalyses the reaction GTP + H2O = 7,8-dihydroneopterin 3'-triphosphate + formate + H(+). It functions in the pathway cofactor biosynthesis; 7,8-dihydroneopterin triphosphate biosynthesis; 7,8-dihydroneopterin triphosphate from GTP: step 1/1. The sequence is that of GTP cyclohydrolase 1 from Vibrio parahaemolyticus serotype O3:K6 (strain RIMD 2210633).